Here is a 377-residue protein sequence, read N- to C-terminus: MSFELERIDIEKDREFSEIMHGKDAAKERGLLSSFRKDKEAQKIALDSYFGFWGDKCTSEKNDIHQQERFKFYATLTRHYYNLVTDFYEYGWSTSFHFCRFAKDESFSQAIARHEHYIALHAGIREGETVLDVGCGVGGPACQISVFTGANIVGLNNNDYQIQRAKYYSEKKGLSDKLKFIKGDFMQMPFPENSFDKIYSIEATIHAPSLEGVYSEIYRVLKPGGLYASYEWVMLNKYDENDPEHQQIVYGIEIGDSIPKISKIGEAEAALIKVGFEIIHSEELSTKNSPLPWYYYLDGDLRKVRSFRDFISIARMTTIGKWLISSFIGLMEFIGLLPKGSKKVNDILLVAADSLVKAGKKEIFTPMQLWVCRKPLV.

This sequence belongs to the class I-like SAM-binding methyltransferase superfamily. Erg6/SMT family.

The enzyme catalyses lanosterol + S-adenosyl-L-methionine = eburicol + S-adenosyl-L-homocysteine + H(+). The catalysed reaction is eburicol + S-adenosyl-L-methionine = (24Z)-ethylidenelanosterol + S-adenosyl-L-homocysteine + H(+). It participates in steroid metabolism. Its function is as follows. Catalyzes the transfer of 2 methyl groups from 2 S-adenosyl-methionine molecules to the C-24 of lanosterol, producing first eburicol (24-methylenelanosterol) from lanosterol and then pneumocysterol (24Z-ethylidenelanosterol) from eburicol. The polypeptide is Sterol 24-C-methyltransferase (erg6) (Pneumocystis carinii (strain B80) (Rat pneumocystis pneumonia agent)).